The primary structure comprises 58 residues: Large ribosomal subunit protein bL32 (58 aa).

This sequence belongs to the bacterial ribosomal protein bL32 family.

This chain is Large ribosomal subunit protein bL32, found in Caldicellulosiruptor saccharolyticus (strain ATCC 43494 / DSM 8903 / Tp8T 6331).